Consider the following 233-residue polypeptide: Zinc import ATP-binding protein ZnuC (233 aa).

The ABC transporter domain maps to I6–L222. Residue G38–T45 coordinates ATP.

Belongs to the ABC transporter superfamily. Zinc importer (TC 3.A.1.15.5) family. As to quaternary structure, the complex is composed of two ATP-binding proteins (ZnuC), two transmembrane proteins (ZnuB) and a solute-binding protein (ZnuA).

The protein localises to the cell inner membrane. The catalysed reaction is Zn(2+)(out) + ATP(in) + H2O(in) = Zn(2+)(in) + ADP(in) + phosphate(in) + H(+)(in). Its function is as follows. Part of the ABC transporter complex ZnuABC involved in zinc import. Responsible for energy coupling to the transport system. This Rickettsia prowazekii (strain Madrid E) protein is Zinc import ATP-binding protein ZnuC.